The sequence spans 411 residues: Arginine deiminase (411 aa).

Cysteine 401 functions as the Amidino-cysteine intermediate in the catalytic mechanism.

Belongs to the arginine deiminase family.

Its subcellular location is the cytoplasm. The enzyme catalyses L-arginine + H2O = L-citrulline + NH4(+). It participates in amino-acid degradation; L-arginine degradation via ADI pathway; carbamoyl phosphate from L-arginine: step 1/2. In Streptococcus equi subsp. zooepidemicus (strain H70), this protein is Arginine deiminase.